The primary structure comprises 458 residues: Chromosomal replication initiator protein DnaA (458 aa).

The tract at residues 1–84 (MENIWLEAQT…FHVAEEKPEA (84 aa)) is domain I, interacts with DnaA modulators. Residues 80–119 (EKPEAAHEAKPEKEAKPAREKERDKDKEKEKDREKEKKEL) are compositionally biased toward basic and acidic residues. The segment at 80–120 (EKPEAAHEAKPEKEAKPAREKERDKDKEKEKDREKEKKELV) is disordered. Residues 84 to 121 (AAHEAKPEKEAKPAREKERDKDKEKEKDREKEKKELVP) are domain II. The interval 122-338 (NLNPKYTFES…GMLIRLEAFA (217 aa)) is domain III, AAA+ region. ATP is bound by residues G166, G168, K169, and T170. Residues 339 to 458 (SLTGQEITLS…VEDIRKKLFT (120 aa)) form a domain IV, binds dsDNA region.

Belongs to the DnaA family. In terms of assembly, oligomerizes as a right-handed, spiral filament on DNA at oriC.

It is found in the cytoplasm. Plays an essential role in the initiation and regulation of chromosomal replication. ATP-DnaA binds to the origin of replication (oriC) to initiate formation of the DNA replication initiation complex once per cell cycle. Binds the DnaA box (a 9 base pair repeat at the origin) and separates the double-stranded (ds)DNA. Forms a right-handed helical filament on oriC DNA; dsDNA binds to the exterior of the filament while single-stranded (ss)DNA is stabiized in the filament's interior. The ATP-DnaA-oriC complex binds and stabilizes one strand of the AT-rich DNA unwinding element (DUE), permitting loading of DNA polymerase. After initiation quickly degrades to an ADP-DnaA complex that is not apt for DNA replication. Binds acidic phospholipids. This Citrifermentans bemidjiense (strain ATCC BAA-1014 / DSM 16622 / JCM 12645 / Bem) (Geobacter bemidjiensis) protein is Chromosomal replication initiator protein DnaA.